The primary structure comprises 203 residues: Dephospho-CoA kinase (203 aa).

In terms of domain architecture, DPCK spans 4-201 (IIGLTGGIGS…RKYLMLARKH (198 aa)). 12–17 (GSGKTR) provides a ligand contact to ATP.

This sequence belongs to the CoaE family.

The protein localises to the cytoplasm. The catalysed reaction is 3'-dephospho-CoA + ATP = ADP + CoA + H(+). It functions in the pathway cofactor biosynthesis; coenzyme A biosynthesis; CoA from (R)-pantothenate: step 5/5. Its function is as follows. Catalyzes the phosphorylation of the 3'-hydroxyl group of dephosphocoenzyme A to form coenzyme A. The chain is Dephospho-CoA kinase from Nitrosomonas europaea (strain ATCC 19718 / CIP 103999 / KCTC 2705 / NBRC 14298).